A 208-amino-acid polypeptide reads, in one-letter code: N-(5'-phosphoribosyl)anthranilate isomerase (208 aa).

It belongs to the TrpF family.

It carries out the reaction N-(5-phospho-beta-D-ribosyl)anthranilate = 1-(2-carboxyphenylamino)-1-deoxy-D-ribulose 5-phosphate. It functions in the pathway amino-acid biosynthesis; L-tryptophan biosynthesis; L-tryptophan from chorismate: step 3/5. The protein is N-(5'-phosphoribosyl)anthranilate isomerase of Natronomonas pharaonis (strain ATCC 35678 / DSM 2160 / CIP 103997 / JCM 8858 / NBRC 14720 / NCIMB 2260 / Gabara) (Halobacterium pharaonis).